The chain runs to 594 residues: Neopentalenolactone D synthase (594 aa).

FAD is bound by residues 64 to 65, 86 to 87, 94 to 95, 106 to 107, Y112, V156, and M494; these read IG, DK, TW, and DV.

The protein belongs to the FAD-binding monooxygenase family. FAD serves as cofactor.

It catalyses the reaction 1-deoxy-11-oxopentalenate + NADPH + O2 + H(+) = neopentalenolactone D + NADP(+) + H2O. It functions in the pathway antibiotic biosynthesis; neopentalenolactone biosynthesis. Its function is as follows. Catalyzes the flavin-dependent Baeyer-Villiger oxidation of 1-deoxy-11-oxopentalenic acid to neopentalenolactone D in the biosynthesis of neopentalenolactone antibiotic. The polypeptide is Neopentalenolactone D synthase (ptlE) (Streptomyces avermitilis (strain ATCC 31267 / DSM 46492 / JCM 5070 / NBRC 14893 / NCIMB 12804 / NRRL 8165 / MA-4680)).